A 551-amino-acid polypeptide reads, in one-letter code: MNNTIINSLIGGDDSIKRSNVFAVDSQIPTLYMPQYISLSGVMTNDGPDNQAIASFEIRDQYITALNHLVLSLELPEVKGMGRFGYVPYVGYKCINHVSISSCNGVIWEIEGEELYNNCINNTIALKHSGYSSELNDISIGLTPNDTIKEPSTVYVYIKTPFDVEDTFSSLKLSDSKITVTVTFNPVSDIVIRDSSFDFETFNKEFVYVPELSFIGYMVKNVQIKPSFIEKPRRVIGQINQPTATVTEVHAATSLSVYTKPYYGNTDNKFISYPGYSQDEKDYIDAYVSRLLDDLVIVSDGPPTGYPESAEIVEVPEDGIVSIQDADVYVKIDNVPDNMSVYLHTNLLMFGTRKNSFIYNISKKFSAITGTYSDATKRTIFAHISHSINIIDTSIPVSLWTSQRNVYNGDNRSAESKAKDLFINDPFIKGIDFKNKTDIISRLEVRFGNDVLYSENGPISRIYNELLTKSNNGTRTLTFNFTPKIFFRPTTITANVSRGKDKLSVRVVYSTMDVNHPIYYVQKQLVVVCNDLYKVSYDQGVSITKIMGDNN.

The protein belongs to the orthopoxvirus protein OPG125 family. As to quaternary structure, homotrimer. Self-assembles to form a layer. Interacts with OPG158 (via N-terminus); this interaction is necessary for OPG125 association with membranes.

Its subcellular location is the membrane. Its function is as follows. Scaffold protein which forms a transitory spherical honeycomb lattice providing curvature and rigidity to the convex membrane of crescent and immature virions (IV). This association occurs concomitantly with viral membrane formation. Targeted by the drug rifampicin, which prevents the formation of this lattice, and hence virus morphogenesis. In the presence of rifampicin, irregularly shaped membranes that lack the honeycomb layer accumulate around areas of electron-dense viroplasm. This layer is lost from virions during maturation from IV to mature virion (MV), through the proteolysis of OPG158 N-terminus. This is Scaffold protein OPG125 (OPG125) from Vaccinia virus (strain Ankara) (VACV).